The sequence spans 327 residues: 4-hydroxy-2-oxoglutarate aldolase, mitochondrial (327 aa).

A mitochondrion-targeting transit peptide spans 1 to 25 (MLGPQVWSSVRQGLSRSLSRNVGVW). 77 to 78 (SN) provides a ligand contact to substrate. The active-site Schiff-base intermediate with substrate is Lys196. Ser198 and Gly222 together coordinate substrate.

Belongs to the DapA family. Homotetramer.

It localises to the mitochondrion. The catalysed reaction is (4S)-4-hydroxy-2-oxoglutarate = glyoxylate + pyruvate. It carries out the reaction (4R)-4-hydroxy-2-oxoglutarate = glyoxylate + pyruvate. Its activity is regulated as follows. Inhibited by divalent cations. Catalyzes the final step in the metabolic pathway of hydroxyproline. This is 4-hydroxy-2-oxoglutarate aldolase, mitochondrial (HOGA1) from Homo sapiens (Human).